A 686-amino-acid chain; its full sequence is Translation initiation factor IF-2 (686 aa).

Positions 54–105 are disordered; the sequence is KPSVADEFEVEEKVVRSKKNSNKKKKKGKGNEDKRQENFAGRQQTQTVETPD. The span at 69-81 shows a compositional bias: basic residues; that stretch reads RSKKNSNKKKKKG. The tr-type G domain occupies 188–357; the sequence is ERPAVVTIMG…LLVSEVEEYK (170 aa). Residues 197–204 are G1; it reads GHVDHGKT. 197-204 contributes to the GTP binding site; it reads GHVDHGKT. The segment at 222–226 is G2; sequence GITQH. The G3 stretch occupies residues 243–246; that stretch reads DTPG. Residues 243-247 and 297-300 each bind GTP; these read DTPGH and NKMD. Residues 297–300 form a G4 region; it reads NKMD. The segment at 333-335 is G5; sequence SAI.

The protein belongs to the TRAFAC class translation factor GTPase superfamily. Classic translation factor GTPase family. IF-2 subfamily.

Its subcellular location is the cytoplasm. In terms of biological role, one of the essential components for the initiation of protein synthesis. Protects formylmethionyl-tRNA from spontaneous hydrolysis and promotes its binding to the 30S ribosomal subunits. Also involved in the hydrolysis of GTP during the formation of the 70S ribosomal complex. This Bacillus cereus (strain AH187) protein is Translation initiation factor IF-2.